The primary structure comprises 213 residues: ATP-dependent dethiobiotin synthetase BioD (213 aa).

Residue 13–18 participates in ATP binding; that stretch reads GIGKTV. T17 is a binding site for Mg(2+). K33 is a catalytic residue. E100 serves as a coordination point for Mg(2+). Residues 100–103 and 184–186 each bind ATP; these read EGAG and PHL.

It belongs to the dethiobiotin synthetase family. Homodimer. Requires Mg(2+) as cofactor.

The protein resides in the cytoplasm. The enzyme catalyses (7R,8S)-7,8-diammoniononanoate + CO2 + ATP = (4R,5S)-dethiobiotin + ADP + phosphate + 3 H(+). It participates in cofactor biosynthesis; biotin biosynthesis; biotin from 7,8-diaminononanoate: step 1/2. In terms of biological role, catalyzes a mechanistically unusual reaction, the ATP-dependent insertion of CO2 between the N7 and N8 nitrogen atoms of 7,8-diaminopelargonic acid (DAPA, also called 7,8-diammoniononanoate) to form a ureido ring. The protein is ATP-dependent dethiobiotin synthetase BioD of Rhodopseudomonas palustris (strain BisA53).